We begin with the raw amino-acid sequence, 82 residues long: MKEGIHPKNHKVIFQDVNSGYRFLSTSTKTSNETAEWEDGNTYPVIKVEVSSDTHPFYTGRQKFNEKGGRVEQFKKRYNMGK.

Belongs to the bacterial ribosomal protein bL31 family. Type B subfamily. As to quaternary structure, part of the 50S ribosomal subunit after the end of exponential growth.

Functionally, while neither of the L31 paralogs is essential, this protein does not seem to function as the main L31 protein. Has a higher affinity for 70S ribosomes than the zinc-containing L31 paralog; is able to displace it to varying extents, even under zinc-replete conditions. The sequence is that of Large ribosomal subunit protein bL31B (rpmE2) from Bacillus subtilis (strain 168).